The chain runs to 212 residues: Thymidylate kinase (212 aa).

Residue 11-18 coordinates ATP; sequence GPEGAGKS.

Belongs to the thymidylate kinase family.

It catalyses the reaction dTMP + ATP = dTDP + ADP. Its function is as follows. Phosphorylation of dTMP to form dTDP in both de novo and salvage pathways of dTTP synthesis. In Streptococcus sanguinis (strain SK36), this protein is Thymidylate kinase.